Reading from the N-terminus, the 282-residue chain is Putative SLC9B1-like protein SLC9B1P1 (282 aa).

Helical transmembrane passes span 27–47, 51–71, 87–107, 135–155, 174–194, 198–218, and 239–259; these read LLAITGFNTCLSIVFYSGGMI, IASLRNVCISLLAGIVLGFFV, GFLVLITFVSAVLGSQPIGLH, IITNVWDIFQPLLFGLVGAEV, LALCVRILNIYLLMCFAGFSF, IFIALAWMPKATVQAVLGPLA, and VAFLAIMITAPNGALLMGILG.

Belongs to the monovalent cation:proton antiporter 1 (CPA1) transporter (TC 2.A.36) family.

It is found in the membrane. This chain is Putative SLC9B1-like protein SLC9B1P1 (SLC9B1P1), found in Homo sapiens (Human).